Reading from the N-terminus, the 435-residue chain is Tol-Pal system protein TolB (435 aa).

The signal sequence occupies residues 1 to 26; it reads MKIFSPIRLVLAIAALMSVFSAPAFA.

It belongs to the TolB family. In terms of assembly, the Tol-Pal system is composed of five core proteins: the inner membrane proteins TolA, TolQ and TolR, the periplasmic protein TolB and the outer membrane protein Pal. They form a network linking the inner and outer membranes and the peptidoglycan layer.

The protein resides in the periplasm. In terms of biological role, part of the Tol-Pal system, which plays a role in outer membrane invagination during cell division and is important for maintaining outer membrane integrity. The polypeptide is Tol-Pal system protein TolB (Agrobacterium fabrum (strain C58 / ATCC 33970) (Agrobacterium tumefaciens (strain C58))).